A 184-amino-acid polypeptide reads, in one-letter code: ATP synthase subunit b, chloroplastic (184 aa).

The helical transmembrane segment at 27-49 (LATNPINLSVVLGVLIFFGKGVL) threads the bilayer.

This sequence belongs to the ATPase B chain family. F-type ATPases have 2 components, F(1) - the catalytic core - and F(0) - the membrane proton channel. F(1) has five subunits: alpha(3), beta(3), gamma(1), delta(1), epsilon(1). F(0) has four main subunits: a(1), b(1), b'(1) and c(10-14). The alpha and beta chains form an alternating ring which encloses part of the gamma chain. F(1) is attached to F(0) by a central stalk formed by the gamma and epsilon chains, while a peripheral stalk is formed by the delta, b and b' chains.

The protein localises to the plastid. Its subcellular location is the chloroplast thylakoid membrane. F(1)F(0) ATP synthase produces ATP from ADP in the presence of a proton or sodium gradient. F-type ATPases consist of two structural domains, F(1) containing the extramembraneous catalytic core and F(0) containing the membrane proton channel, linked together by a central stalk and a peripheral stalk. During catalysis, ATP synthesis in the catalytic domain of F(1) is coupled via a rotary mechanism of the central stalk subunits to proton translocation. In terms of biological role, component of the F(0) channel, it forms part of the peripheral stalk, linking F(1) to F(0). This Phalaenopsis aphrodite subsp. formosana (Moth orchid) protein is ATP synthase subunit b, chloroplastic.